Reading from the N-terminus, the 280-residue chain is Cell division control protein 2 homolog B (280 aa).

ATP is bound by residues 1–5 and Lys-20; that span reads AYGVV. Residues 1–274 form the Protein kinase domain; it reads AYGVVYKARD…AKKALEHEYF (274 aa). A Phosphotyrosine modification is found at Tyr-2. Asp-114 functions as the Proton acceptor in the catalytic mechanism. Thr-148 is modified (phosphothreonine; by CAK).

This sequence belongs to the protein kinase superfamily. CMGC Ser/Thr protein kinase family. CDC2/CDKX subfamily.

The enzyme catalyses L-seryl-[protein] + ATP = O-phospho-L-seryl-[protein] + ADP + H(+). It catalyses the reaction L-threonyl-[protein] + ATP = O-phospho-L-threonyl-[protein] + ADP + H(+). It carries out the reaction [DNA-directed RNA polymerase] + ATP = phospho-[DNA-directed RNA polymerase] + ADP + H(+). Its activity is regulated as follows. Phosphorylation at Tyr-2 inactivates the enzyme, while phosphorylation at Thr-148 activates it. Functionally, plays a key role in the control of the eukaryotic cell cycle. The protein is Cell division control protein 2 homolog B (CDC2B) of Antirrhinum majus (Garden snapdragon).